A 442-amino-acid chain; its full sequence is Putative mannan endo-1,6-alpha-mannosidase C1198.07c (442 aa).

The N-terminal stretch at 1–19 (MRYLSFFFEFFFLFSFAFA) is a signal peptide. Over 20–421 (FDFDVTSDDS…TPATKSDKGW (402 aa)) the chain is Lumenal. N75, N124, N193, N229, N254, N257, and N356 each carry an N-linked (GlcNAc...) asparagine glycan. Residues 422 to 442 (AGFLTFAFSFVFLLFSIWLYF) form a helical membrane-spanning segment.

It belongs to the glycosyl hydrolase 76 family.

It is found in the endoplasmic reticulum membrane. The catalysed reaction is Random hydrolysis of (1-&gt;6)-alpha-D-mannosidic linkages in unbranched (1-&gt;6)-mannans.. The polypeptide is Putative mannan endo-1,6-alpha-mannosidase C1198.07c (Schizosaccharomyces pombe (strain 972 / ATCC 24843) (Fission yeast)).